Reading from the N-terminus, the 609-residue chain is Dihydroxy-acid dehydratase (609 aa).

Position 81 (aspartate 81) interacts with Mg(2+). Cysteine 122 is a [2Fe-2S] cluster binding site. Mg(2+)-binding residues include aspartate 123 and lysine 124. Lysine 124 is modified (N6-carboxylysine). Cysteine 195 contacts [2Fe-2S] cluster. Glutamate 491 lines the Mg(2+) pocket. The active-site Proton acceptor is serine 517.

The protein belongs to the IlvD/Edd family. As to quaternary structure, homodimer. Requires [2Fe-2S] cluster as cofactor. The cofactor is Mg(2+).

It catalyses the reaction (2R)-2,3-dihydroxy-3-methylbutanoate = 3-methyl-2-oxobutanoate + H2O. The enzyme catalyses (2R,3R)-2,3-dihydroxy-3-methylpentanoate = (S)-3-methyl-2-oxopentanoate + H2O. Its pathway is amino-acid biosynthesis; L-isoleucine biosynthesis; L-isoleucine from 2-oxobutanoate: step 3/4. It functions in the pathway amino-acid biosynthesis; L-valine biosynthesis; L-valine from pyruvate: step 3/4. In terms of biological role, functions in the biosynthesis of branched-chain amino acids. Catalyzes the dehydration of (2R,3R)-2,3-dihydroxy-3-methylpentanoate (2,3-dihydroxy-3-methylvalerate) into 2-oxo-3-methylpentanoate (2-oxo-3-methylvalerate) and of (2R)-2,3-dihydroxy-3-methylbutanoate (2,3-dihydroxyisovalerate) into 2-oxo-3-methylbutanoate (2-oxoisovalerate), the penultimate precursor to L-isoleucine and L-valine, respectively. This is Dihydroxy-acid dehydratase from Acinetobacter baumannii (strain ACICU).